A 379-amino-acid chain; its full sequence is Retron Se72 reverse transcriptase (379 aa).

One can recognise a Reverse transcriptase domain in the interval Met-1–Val-245. Residues Asp-109, Asp-188, and Asp-189 each coordinate Mg(2+).

The protein belongs to the bacterial reverse transcriptase family.

The enzyme catalyses DNA(n) + a 2'-deoxyribonucleoside 5'-triphosphate = DNA(n+1) + diphosphate. Functionally, reverse transcriptase (RT) component of antiviral defense system retron Se72, composed of a non-coding RNA (ncRNA), this reverse transcriptase (RT) and the following cold shock-like protein. Expression of retron Se72 confers protection against bacteriophage lambda. At multiplicity of infection (MOI) of 0.02 cultures slow growth when infected with lambda but do not collapse, at MOI 2 cultures enter growth stasis. Responsible for synthesis of msDNA (a branched molecule with RNA linked by a 2',5'-phosphodiester bond to ssDNA). The retron transcript serves as primer (from a conserved internal G residue) and template for the reaction, and codes for the RT. The DNA segment is predicted to be 72 bases long. The sequence is that of Retron Se72 reverse transcriptase from Salmonella heidelberg (strain 579083-10).